The following is a 967-amino-acid chain: Phosphatidylserine decarboxylase proenzyme 3 (967 aa).

The segment at 217–255 (FIAEPDSSIPPSESSVSISTDTGKETPPSKSKKSSNQPY) is disordered. The span at 220-237 (EPDSSIPPSESSVSISTD) shows a compositional bias: low complexity. The region spanning 250–373 (SSNQPYVSIG…SSAQVDPETG (124 aa)) is the C2 domain. Asp343, Ser346, and Asp349 together coordinate Ca(2+). Positions 532–544 (DQQATQTPQSPSS) are enriched in low complexity. Positions 532–566 (DQQATQTPQSPSSNEESGPGTPTQTSDQYEDSEDS) are disordered. The span at 545–558 (NEESGPGTPTQTSD) shows a compositional bias: polar residues. Catalysis depends on charge relay system; for autoendoproteolytic cleavage activity residues Asp769, His825, and Ser912. Ser912 serves as the catalytic Schiff-base intermediate with substrate; via pyruvic acid; for decarboxylase activity. Pyruvic acid (Ser); by autocatalysis is present on Ser912. Positions 947 to 967 (IGQKIDPNKPTDAEDHSKSDS) are disordered.

The protein belongs to the phosphatidylserine decarboxylase family. PSD-B subfamily. Eukaryotic type II sub-subfamily. Heterodimer of a large membrane-associated beta subunit and a small pyruvoyl-containing alpha subunit. Pyruvate is required as a cofactor. Requires Ca(2+) as cofactor. In terms of processing, is synthesized initially as an inactive proenzyme. Formation of the active enzyme involves a self-maturation process in which the active site pyruvoyl group is generated from an internal serine residue via an autocatalytic post-translational modification. Two non-identical subunits are generated from the proenzyme in this reaction, and the pyruvate is formed at the N-terminus of the alpha chain, which is derived from the carboxyl end of the proenzyme. The autoendoproteolytic cleavage occurs by a canonical serine protease mechanism, in which the side chain hydroxyl group of the serine supplies its oxygen atom to form the C-terminus of the beta chain, while the remainder of the serine residue undergoes an oxidative deamination to produce ammonia and the pyruvoyl prosthetic group on the alpha chain. During this reaction, the Ser that is part of the protease active site of the proenzyme becomes the pyruvoyl prosthetic group, which constitutes an essential element of the active site of the mature decarboxylase.

The protein localises to the golgi apparatus membrane. The protein resides in the endosome membrane. It is found in the cytoplasm. It carries out the reaction a 1,2-diacyl-sn-glycero-3-phospho-L-serine + H(+) = a 1,2-diacyl-sn-glycero-3-phosphoethanolamine + CO2. Its pathway is phospholipid metabolism; phosphatidylethanolamine biosynthesis; phosphatidylethanolamine from CDP-diacylglycerol: step 2/2. Its function is as follows. Catalyzes the formation of phosphatidylethanolamine (PtdEtn) from phosphatidylserine (PtdSer). Plays a central role in phospholipid metabolism and in the interorganelle trafficking of phosphatidylserine. Together with psd1 and psd2, responsible for the majority of phosphatidylethanolamine synthesis. The chain is Phosphatidylserine decarboxylase proenzyme 3 from Schizosaccharomyces pombe (strain 972 / ATCC 24843) (Fission yeast).